The primary structure comprises 329 residues: Diaminopimelate epimerase (329 aa).

Substrate contacts are provided by Asn-14 and Asn-73. Cys-82 (proton donor) is an active-site residue. Substrate-binding positions include 83 to 84 (GN), Asn-170, Asn-206, and 224 to 225 (ER). Cys-233 functions as the Proton acceptor in the catalytic mechanism. Position 234–235 (234–235 (GT)) interacts with substrate.

It belongs to the diaminopimelate epimerase family. In terms of assembly, homodimer.

The protein resides in the cytoplasm. The enzyme catalyses (2S,6S)-2,6-diaminopimelate = meso-2,6-diaminopimelate. Its pathway is amino-acid biosynthesis; L-lysine biosynthesis via DAP pathway; DL-2,6-diaminopimelate from LL-2,6-diaminopimelate: step 1/1. In terms of biological role, catalyzes the stereoinversion of LL-2,6-diaminopimelate (L,L-DAP) to meso-diaminopimelate (meso-DAP), a precursor of L-lysine and an essential component of the bacterial peptidoglycan. This Listeria monocytogenes serotype 4b (strain CLIP80459) protein is Diaminopimelate epimerase.